Reading from the N-terminus, the 421-residue chain is Adenylosuccinate synthetase (421 aa).

Residues 11-17 (GDEGKGK) and 39-41 (GHT) each bind GTP. Asp12 (proton acceptor) is an active-site residue. Asp12 and Gly39 together coordinate Mg(2+). IMP is bound by residues 12 to 15 (DEGK), 37 to 40 (NAGH), Thr129, Arg143, Asn219, Thr234, and Arg298. His40 (proton donor) is an active-site residue. 294–300 (VTTGRRR) contacts substrate. GTP-binding positions include Arg300, 326 to 328 (KLD), and 409 to 411 (GTG).

It belongs to the adenylosuccinate synthetase family. In terms of assembly, homodimer. Requires Mg(2+) as cofactor.

Its subcellular location is the cytoplasm. It carries out the reaction IMP + L-aspartate + GTP = N(6)-(1,2-dicarboxyethyl)-AMP + GDP + phosphate + 2 H(+). The protein operates within purine metabolism; AMP biosynthesis via de novo pathway; AMP from IMP: step 1/2. In terms of biological role, plays an important role in the de novo pathway and in the salvage pathway of purine nucleotide biosynthesis. Catalyzes the first committed step in the biosynthesis of AMP from IMP. This chain is Adenylosuccinate synthetase, found in Paracoccidioides brasiliensis (strain Pb03).